An 87-amino-acid polypeptide reads, in one-letter code: UPF0250 protein NT01EI_2946 (87 aa).

The protein belongs to the UPF0250 family.

The sequence is that of UPF0250 protein NT01EI_2946 from Edwardsiella ictaluri (strain 93-146).